Reading from the N-terminus, the 1334-residue chain is Adenylate cyclase type 9 (1334 aa).

Disordered stretches follow at residues 1–28 (MASP…SNSV) and 49–71 (ISSS…GLRR). Residues 1-113 (MASPPHQQLL…CFPQTQRRFR (113 aa)) lie on the Cytoplasmic side of the membrane. A compositionally biased stretch (polar residues) spans 16 to 28 (EVSCDSSGDSNSV). Gly residues predominate over residues 57–69 (ESGGVGRGGGGGL). The helical transmembrane segment at 114 to 134 (YALFYIGSACLLWGIYFGVHM) threads the bilayer. Topologically, residues 135 to 137 (REK) are extracellular. The chain crosses the membrane as a helical span at residues 138-158 (QMVFMVPALCFLLVCVAFFAF). Residues 159–167 (TFTKAYARR) are Cytoplasmic-facing. A helical transmembrane segment spans residues 168–187 (YVWTSGYTLLVFALTLAPQF). Topologically, residues 188–207 (QPWTLGERQRVQPRPAAPVD) are extracellular. The chain crosses the membrane as a helical span at residues 208-227 (TCLSQVGSFSMCVEVLLLLY). Residues 228–233 (TVMHLP) lie on the Cytoplasmic side of the membrane. A helical membrane pass occupies residues 234 to 250 (LYLSLFLGLSYSVLFET). The Extracellular segment spans residues 251-269 (SAFRDESCTLLGGGAVYWE). Residues 270–290 (LLSKAFLHVCIHAIGIHLFIM) traverse the membrane as a helical segment. At 291–768 (SEVRSRSTFL…VKTFASATFS (478 aa)) the chain is on the cytoplasmic side. The segment at 338–363 (QGDDESENSVKRHSTSSPKNRKKKPS) is disordered. Positions 348-363 (KRHSTSSPKNRKKKPS) are enriched in basic residues. 3 residues coordinate Mg(2+): Asp-388, Ile-389, and Asp-432. ATP-binding positions include 388 to 393 (DIVGFT), 430 to 432 (LGD), and Arg-476. The disordered stretch occupies residues 635 to 670 (GCQDEHKNSTKAPGGHSPKTQNGLLSPPQEEKLSNS). A helical membrane pass occupies residues 769–789 (SLLDVFLSTTVFLILSVTCFL). Residues 790–800 (KHGMVASPPPP) are Extracellular-facing. A helical membrane pass occupies residues 801–821 (AAVVVFVIAILLEVLSLVISV). At 822 to 849 (RMVFFLEEVMACTKRLLELISGWLPRHF) the chain is on the cytoplasmic side. The helical transmembrane segment at 850 to 870 (LGAILVSLPALAVFSHFTSDF) threads the bilayer. Topologically, residues 871 to 873 (ETN) are extracellular. Residues 874 to 894 (IHYTMFMCCAILIAIVQYCNF) traverse the membrane as a helical segment. Residues 895–902 (CQLSSWMR) lie on the Cytoplasmic side of the membrane. Residues 903 to 923 (SLLATVVGAVLLILLYVSLCP) traverse the membrane as a helical segment. Over 924–957 (DSSVETLHLDLAQNLSSRKSPCNSSMPADVKRPA) the chain is Extracellular. Residues Asn-937 and Asn-946 are each glycosylated (N-linked (GlcNAc...) asparagine). Residues 958 to 978 (DLIGQEVILAVFLLLLLVWFL) traverse the membrane as a helical segment. At 979 to 1334 (NRSFEVSYRL…LTKLNVSKSV (356 aa)) the chain is on the cytoplasmic side. ATP is bound by residues Lys-1090, 1167 to 1169 (DIW), 1174 to 1178 (NIASR), and Lys-1214. The segment at 1266–1303 (SVQNSDKTAHATDNSETKDALPSSKKLQKEPTKAEERC) is disordered. 2 stretches are compositionally biased toward basic and acidic residues: residues 1272–1284 (KTAH…ETKD) and 1292–1303 (LQKEPTKAEERC).

This sequence belongs to the adenylyl cyclase class-4/guanylyl cyclase family. Mg(2+) is required as a cofactor. It depends on Mn(2+) as a cofactor. Detected in embryonic heart (at protein level).

The protein localises to the cell membrane. It localises to the membrane. The enzyme catalyses ATP = 3',5'-cyclic AMP + diphosphate. Its activity is regulated as follows. Insensitive to calcium/calmodulin, forskolin and somatostatin. Stimulated by beta-adrenergic receptor activation. Activity is down-regulated by calcium/calcineurin. In terms of biological role, adenylyl cyclase that catalyzes the formation of the signaling molecule cAMP in response to activation of G protein-coupled receptors. The sequence is that of Adenylate cyclase type 9 (ADCY9) from Gallus gallus (Chicken).